The sequence spans 72 residues: Putative transmembrane protein DDB_G0272126 (72 aa).

A run of 2 helical transmembrane segments spans residues lysine 6–isoleucine 26 and isoleucine 38–glycine 58.

The protein resides in the membrane. The chain is Putative transmembrane protein DDB_G0272126 from Dictyostelium discoideum (Social amoeba).